Reading from the N-terminus, the 153-residue chain is Peptide deformylase (153 aa).

Fe cation is bound by residues Cys-87 and His-129. Glu-130 is an active-site residue. Position 133 (His-133) interacts with Fe cation.

This sequence belongs to the polypeptide deformylase family. Fe(2+) serves as cofactor.

It catalyses the reaction N-terminal N-formyl-L-methionyl-[peptide] + H2O = N-terminal L-methionyl-[peptide] + formate. In terms of biological role, removes the formyl group from the N-terminal Met of newly synthesized proteins. Requires at least a dipeptide for an efficient rate of reaction. N-terminal L-methionine is a prerequisite for activity but the enzyme has broad specificity at other positions. The chain is Peptide deformylase from Dictyoglomus turgidum (strain DSM 6724 / Z-1310).